The sequence spans 68 residues: Beta-defensin 1 (68 aa).

A signal peptide spans 1-21; the sequence is MRTSYLLLFTLCLLLSEMASG. The propeptide occupies 22 to 32; sequence GNFLTGLGHRS. 3 cysteine pairs are disulfide-bonded: Cys37–Cys66, Cys44–Cys59, and Cys49–Cys67.

This sequence belongs to the beta-defensin family. As to quaternary structure, monomer. Homodimer.

It is found in the secreted. Its subcellular location is the membrane. Its function is as follows. Has bactericidal activity. May act as a ligand for C-C chemokine receptor CCR6. Positively regulates the sperm motility and bactericidal activity in a CCR6-dependent manner. Binds to CCR6 and triggers Ca2+ mobilization in the sperm which is important for its motility. The sequence is that of Beta-defensin 1 (DEFB1) from Pongo pygmaeus (Bornean orangutan).